Here is a 461-residue protein sequence, read N- to C-terminus: Photosystem II CP43 reaction center protein (461 aa).

The propeptide occupies 1 to 2; the sequence is ME. The residue at position 3 (T3) is an N-acetylthreonine. T3 carries the post-translational modification Phosphothreonine. A run of 5 helical transmembrane segments spans residues 57 to 81, 122 to 143, 166 to 188, 243 to 263, and 279 to 300; these read LFEV…PHLA, LLGP…KDRN, KALY…RKIS, KPFA…LSYS, and WFNN…ASQA. E355 contacts [CaMn4O5] cluster. Residues 435–459 traverse the membrane as a helical segment; the sequence is RARAAAAGFEKGIDRDFEPVLSMTP.

This sequence belongs to the PsbB/PsbC family. PsbC subfamily. PSII is composed of 1 copy each of membrane proteins PsbA, PsbB, PsbC, PsbD, PsbE, PsbF, PsbH, PsbI, PsbJ, PsbK, PsbL, PsbM, PsbT, PsbX, PsbY, PsbZ, Psb30/Ycf12, at least 3 peripheral proteins of the oxygen-evolving complex and a large number of cofactors. It forms dimeric complexes. The cofactor is Binds multiple chlorophylls and provides some of the ligands for the Ca-4Mn-5O cluster of the oxygen-evolving complex. It may also provide a ligand for a Cl- that is required for oxygen evolution. PSII binds additional chlorophylls, carotenoids and specific lipids..

The protein localises to the plastid. The protein resides in the chloroplast thylakoid membrane. In terms of biological role, one of the components of the core complex of photosystem II (PSII). It binds chlorophyll and helps catalyze the primary light-induced photochemical processes of PSII. PSII is a light-driven water:plastoquinone oxidoreductase, using light energy to abstract electrons from H(2)O, generating O(2) and a proton gradient subsequently used for ATP formation. This is Photosystem II CP43 reaction center protein from Trachelium caeruleum (Blue throatwort).